Here is a 123-residue protein sequence, read N- to C-terminus: Alpha-lactalbumin A (123 aa).

The 123-residue stretch at 1–123 (KQFTKCELSQ…KLEQWLCEEL (123 aa)) folds into the C-type lysozyme domain. 4 disulfide bridges follow: cysteine 6–cysteine 120, cysteine 28–cysteine 111, cysteine 61–cysteine 77, and cysteine 73–cysteine 91. Ca(2+)-binding residues include lysine 79, aspartate 82, aspartate 84, aspartate 87, and aspartate 88.

This sequence belongs to the glycosyl hydrolase 22 family. In terms of assembly, lactose synthase (LS) is a heterodimer of a catalytic component, beta1,4-galactosyltransferase (beta4Gal-T1) and a regulatory component, alpha-lactalbumin (LA). In terms of tissue distribution, mammary gland specific. Secreted in milk.

The protein localises to the secreted. Regulatory subunit of lactose synthase, changes the substrate specificity of galactosyltransferase in the mammary gland making glucose a good acceptor substrate for this enzyme. This enables LS to synthesize lactose, the major carbohydrate component of milk. In other tissues, galactosyltransferase transfers galactose onto the N-acetylglucosamine of the oligosaccharide chains in glycoproteins. This Equus caballus (Horse) protein is Alpha-lactalbumin A.